Reading from the N-terminus, the 122-residue chain is Small ribosomal subunit protein uS13 (122 aa).

Residues G95–K122 are disordered.

Belongs to the universal ribosomal protein uS13 family. In terms of assembly, part of the 30S ribosomal subunit. Forms a loose heterodimer with protein S19. Forms two bridges to the 50S subunit in the 70S ribosome.

Functionally, located at the top of the head of the 30S subunit, it contacts several helices of the 16S rRNA. In the 70S ribosome it contacts the 23S rRNA (bridge B1a) and protein L5 of the 50S subunit (bridge B1b), connecting the 2 subunits; these bridges are implicated in subunit movement. Contacts the tRNAs in the A and P-sites. The protein is Small ribosomal subunit protein uS13 of Zymomonas mobilis subsp. mobilis (strain ATCC 31821 / ZM4 / CP4).